The following is a 194-amino-acid chain: Probable GTP-binding protein EngB (194 aa).

The 173-residue stretch at 22-194 folds into the EngB-type G domain; that stretch reads DLPEYALAGR…AWQFIKEGME (173 aa). GTP is bound by residues 30–37, 57–61, 75–78, 142–145, and 174–176; these read GRSNVGKS, GKTQT, DVPG, TKAD, and FSS. 2 residues coordinate Mg(2+): Ser-37 and Thr-59.

This sequence belongs to the TRAFAC class TrmE-Era-EngA-EngB-Septin-like GTPase superfamily. EngB GTPase family. Requires Mg(2+) as cofactor.

In terms of biological role, necessary for normal cell division and for the maintenance of normal septation. This Listeria welshimeri serovar 6b (strain ATCC 35897 / DSM 20650 / CCUG 15529 / CIP 8149 / NCTC 11857 / SLCC 5334 / V8) protein is Probable GTP-binding protein EngB.